The chain runs to 503 residues: 2-phosphoxylose phosphatase 1 (503 aa).

Over 1-6 (MLARSR) the chain is Cytoplasmic. A helical; Signal-anchor for type II membrane protein transmembrane segment spans residues 7-27 (FILVLVVGALLAVLSFSLQYL). The Lumenal portion of the chain corresponds to 28 to 503 (HLIPTNPVAE…YQQACHQTVL (476 aa)). A disordered region spans residues 38-63 (QRSAGRSRKRVNPVLHTDPPAPDPIR). N73 is a glycosylation site (N-linked (GlcNAc...) asparagine). The active-site Nucleophile is H98. The N-linked (GlcNAc...) asparagine glycan is linked to N365. The active-site Proton donor is D396. N490 carries an N-linked (GlcNAc...) asparagine glycan.

It belongs to the histidine acid phosphatase family.

The protein localises to the golgi apparatus membrane. It carries out the reaction 3-O-[beta-D-GlcA-(1-&gt;3)-beta-D-Gal-(1-&gt;3)-beta-D-Gal-(1-&gt;4)-beta-D-2-O-P-Xyl]-L-seryl-[protein] + H2O = 3-O-(beta-D-GlcA-(1-&gt;3)-beta-D-Gal-(1-&gt;3)-beta-D-Gal-(1-&gt;4)-beta-D-Xyl)-L-seryl-[protein] + phosphate. In terms of biological role, responsible for the 2-O-dephosphorylation of xylose in the glycosaminoglycan-protein linkage region of proteoglycans thereby regulating the amount of mature glycosaminoglycan (GAG) chains. Sulfated glycosaminoglycans (GAGs), including heparan sulfate and chondroitin sulfate, are synthesized on the so-called common GAG-protein linkage region (GlcUAbeta1-3Galbeta1-3Galbeta1-4Xylbeta1-O-Ser) of core proteins, which is formed by the stepwise addition of monosaccharide residues by the respective specific glycosyltransferases. The protein is 2-phosphoxylose phosphatase 1 of Danio rerio (Zebrafish).